We begin with the raw amino-acid sequence, 1070 residues long: MSTSLLFEQLNFLILVAAEAELPIAHSTRKLLMDNSCNNCQIYELYNENLKDVKTDKDWFMNKFGPQTVHFVISNTINFPFYKIVYFDLLIPVVSHTWVQDSVKTKRHLRTNMYSPNPFHLLRDCQVYISKSSFNKCEYILYSDLLHLLGGTLVNYISNRTTHVIVQSPQDPIIATVSKLTFGSFSSSSTNKHTEKPLREWKFVYPIWILYHFKMAKPLKGELATLCELDMQDTSEEQLFAKWEEVIGDKQTSSSQLTLHPNKTLFKNHHFAISPDLNFFTPLYWFLKGFIEDLDGKVTPLSFSDDLKSVYQAFPDIDCYIGHSANSPILEKTKSIKPEIHVGNVSWLFYMFALQKFTPVSQCKLIHQPFHAKLFTSKELTVAYTNYFGSQRFYIQRLVEILGGLSTPELTRKNTHLITKSTIGKKFKVAKKWSLDPQNAIIVTNHMWLEQCYMNNSKLNPKDSRFQNFKLDDNMGWNIGQIGMDHSSLPTPKNLSMVTYDTQSISEKPPPTNDQMDQINDNTNVLSKKDGTPISSFENSIDEKIDKLQKISGEVAVTHSGDLERSFVSRPSRASFPVVDSKKSNLQKKDSNSDISMETEVFCEGHEKREEKEFTKPITEYDAPKKQEIREQSRKKNDIDYKKEEEETELQVQLGQRTKREIKTSKKNEKEKETNECHIEVDQMTNEKQGEESTGKLISTEDVTSKKDTDKFSHLFEGLSDNDDHINDEKPAVNSKYTTPKTSQNITSGVDTPTTAQTQVFMPSSGNSRLAKTQAAKRLHTDIESLNEFQKNFKRKRIDSEEISLSQDVERSNNNKELATKAEKILARFNELPNYDLKAVCTGCFHDGFNEVDIEILNQLGIKIFDNIKETDKLNCIFAPKILRTEKFLKSLSFEPLKFALKPEFIIDLLKQIHSKKDKLSQININLFDYEINGINESIISKTKLPTKVFERANIRCINLVNDIPGGVDTIGSVLKAHGIEKINVLRSKKCTFEDIIPNDVSKQENGGIFKYVLIVTKASQVKKFTKLINDRDKNETILIVEWNWCVESIFHLNVDFTSKKNVLYQKKNN.

BRCT domains lie at 2 to 103 (STSL…QDSV), 117 to 213 (NPFH…LYHF), 260 to 352 (HPNK…FYMF), and 369 to 453 (PFHA…EQCY). Phosphoserine is present on Ser-304. At Thr-532 the chain carries Phosphothreonine. The interval 572–659 (SRASFPVVDS…LQVQLGQRTK (88 aa)) is disordered. Residues 580-592 (DSKKSNLQKKDSN) show a composition bias toward basic and acidic residues. Phosphoserine is present on residues Ser-591 and Ser-593. 2 stretches are compositionally biased toward basic and acidic residues: residues 603 to 615 (CEGHEKREEKEFT) and 622 to 645 (DAPKKQEIREQSRKKNDIDYKKEE). Ser-720 is modified (phosphoserine). Basic and acidic residues predominate over residues 722-731 (NDDHINDEKP). The disordered stretch occupies residues 722-753 (NDDHINDEKPAVNSKYTTPKTSQNITSGVDTP). Residues 735 to 753 (SKYTTPKTSQNITSGVDTP) show a composition bias toward polar residues. 2 positions are modified to phosphoserine: Ser-800 and Ser-806. BRCT domains follow at residues 829-910 (FNEL…IDLL) and 934-1049 (GINE…CVES).

In terms of assembly, forms a complex with the cullin-RING ligase (CRL) RTT101(MMS1-MMS22). Interacts with MMS22 and RTT101. Interacts with histone H2A; requires H2A to be phosphorylated (gamma-H2A). Interacts with RAD55. Post-translationally, phosphorylated by MEC1.

Its subcellular location is the nucleus. Its function is as follows. Required for resumption of chromosome replication after DNA damage, specifically in S phase. Is recruited to chromatin in the presence of RTT109 and RTT101 in response to stalled replication forks and acts as a scaffold during DNA repair. In Saccharomyces cerevisiae (strain ATCC 204508 / S288c) (Baker's yeast), this protein is Regulator of Ty1 transposition protein 107 (RTT107).